The sequence spans 527 residues: V-set and immunoglobulin domain-containing protein 10 (527 aa).

The first 13 residues, 1-13 (MWTRRWIQFLVLC), serve as a signal peptide directing secretion. Ig-like C2-type domains follow at residues 14 to 111 (LHLW…LKVS), 123 to 212 (PTRT…RQLL), 216 to 306 (PPIT…CQIQ), and 310 to 399 (PLLE…KEIN). Residues 23 to 409 (YLGVFRGDVN…VWLTVNKPHN (387 aa)) are Extracellular-facing. N-linked (GlcNAc...) asparagine glycosylation is found at Asn32, Asn41, Asn52, Asn64, Asn74, Asn90, Asn129, Asn139, Asn191, Asn206, Asn226, Asn260, Asn276, Asn325, Asn346, and Asn375. Cys144 and Cys194 are joined by a disulfide. A disulfide bond links Cys238 and Cys288. Cys330 and Cys387 are joined by a disulfide. The chain crosses the membrane as a helical span at residues 410–430 (IVGLVTALLLLFLLVVAIITG). Topologically, residues 431–527 (TVLYCDPQIY…TGEENQNEEI (97 aa)) are cytoplasmic. The disordered stretch occupies residues 501–527 (RPPESTSSDLFSEVSDDTGEENQNEEI). Acidic residues predominate over residues 514–527 (VSDDTGEENQNEEI).

It is found in the membrane. The chain is V-set and immunoglobulin domain-containing protein 10 (vsig10) from Xenopus laevis (African clawed frog).